A 714-amino-acid chain; its full sequence is Solute carrier family 12 member 8 (714 aa).

6 helical membrane-spanning segments follow: residues 37 to 60 (VLFG…VLFL), 72 to 93 (LLGM…LSGI), 99 to 116 (SSIG…VLGG), 123 to 142 (GLLY…TGFA), 154 to 173 (IWAV…GINL), and 185 to 205 (LLLF…FTHL). N221 carries N-linked (GlcNAc...) asparagine glycosylation. Helical transmembrane passes span 233 to 254 (FFTV…FNMG), 266 to 289 (LGSL…LGAI), 309 to 331 (GFLF…LYGA), 360 to 377 (PVAA…FVFV), and 383 to 403 (LAPI…YSYF). Disordered regions lie at residues 471-503 (KLES…TLQD) and 530-550 (GQES…PEGT). A compositionally biased stretch (polar residues) spans 533-548 (SCWNKQTSKSEGTQPE). The next 2 helical transmembrane spans lie at 593 to 616 (CNPW…QWVY) and 622 to 643 (GVAA…LGSA).

The protein belongs to the SLC12A transporter family. In terms of tissue distribution, ubiquitous with very low level in normal skin.

The protein resides in the membrane. Cation/chloride cotransporter that may play a role in the control of keratinocyte proliferation. The protein is Solute carrier family 12 member 8 (SLC12A8) of Homo sapiens (Human).